The chain runs to 957 residues: Melanoma-associated antigen E1 (957 aa).

The interval 1-433 (MSLVSQNSRR…RNPSKCSIVL (433 aa)) is disordered. 2 stretches are compositionally biased toward polar residues: residues 85 to 96 (SEASSASGQPTV) and 104 to 130 (LLATPSEGLSTSGPPTISKGLCTSVTL). Over residues 138–156 (TSRPPTSSEEPSTSVPATP) the composition is skewed to low complexity. Composition is skewed to polar residues over residues 158-177 (EGTSTSVPPTASEGPSTSVV), 220-232 (LSTSVPPTATEGL), 256-306 (RSTT…GPST), 328-344 (LSTSVPPTATEGLSTSV), 364-380 (RSTSVPPTASDGSDTSV), and 414-428 (TLFSSSASVDRNPSK). MAGE domains follow at residues 491 to 690 (MEQN…YNEA) and 745 to 936 (LESK…YREA). The segment at 743–957 (SRLESKARKL…HRQFFVHNFR (215 aa)) is interaction with DTNA.

As to quaternary structure, interacts with DTNA. Interacts with TRIM28.

Its subcellular location is the cytoplasm. The protein resides in the perinuclear region. It localises to the nucleus. The protein localises to the cell membrane. In terms of biological role, may enhance ubiquitin ligase activity of RING-type zinc finger-containing E3 ubiquitin-protein ligases. Proposed to act through recruitment and/or stabilization of the Ubl-conjugating enzyme (E2) at the E3:substrate complex. This chain is Melanoma-associated antigen E1 (MAGEE1), found in Macaca fascicularis (Crab-eating macaque).